We begin with the raw amino-acid sequence, 270 residues long: UPF0162 protein PA3419 (270 aa).

The protein belongs to the UPF0162 family.

This is UPF0162 protein PA3419 from Pseudomonas aeruginosa (strain ATCC 15692 / DSM 22644 / CIP 104116 / JCM 14847 / LMG 12228 / 1C / PRS 101 / PAO1).